The primary structure comprises 207 residues: Uridine kinase (207 aa).

Position 11 to 18 (11 to 18 (GGSGSGKT)) interacts with ATP.

This sequence belongs to the uridine kinase family.

The protein localises to the cytoplasm. The catalysed reaction is uridine + ATP = UMP + ADP + H(+). It catalyses the reaction cytidine + ATP = CMP + ADP + H(+). The protein operates within pyrimidine metabolism; CTP biosynthesis via salvage pathway; CTP from cytidine: step 1/3. It functions in the pathway pyrimidine metabolism; UMP biosynthesis via salvage pathway; UMP from uridine: step 1/1. This chain is Uridine kinase, found in Staphylococcus haemolyticus (strain JCSC1435).